Here is a 189-residue protein sequence, read N- to C-terminus: Elongation factor P 2 (189 aa).

The protein belongs to the elongation factor P family.

It localises to the cytoplasm. Its pathway is protein biosynthesis; polypeptide chain elongation. Functionally, involved in peptide bond synthesis. Stimulates efficient translation and peptide-bond synthesis on native or reconstituted 70S ribosomes in vitro. Probably functions indirectly by altering the affinity of the ribosome for aminoacyl-tRNA, thus increasing their reactivity as acceptors for peptidyl transferase. This is Elongation factor P 2 from Mesorhizobium japonicum (strain LMG 29417 / CECT 9101 / MAFF 303099) (Mesorhizobium loti (strain MAFF 303099)).